A 545-amino-acid chain; its full sequence is ATP synthase F(1) complex subunit alpha, mitochondrial (545 aa).

The ATP site is built by Gln-216, Gly-218, Lys-219, Thr-220, and Ser-221. Residue Thr-220 participates in Mg(2+) binding. A Mg(2+)-binding site is contributed by Asp-304. Gln-465 and Gln-467 together coordinate ATP.

It belongs to the ATPase alpha/beta chains family. Homotrimer. Component of the ATP synthase complex composed at least of ATP5F1A/subunit alpha, ATP5F1B/subunit beta, ATP5MC1/subunit c (homooctomer), MT-ATP6/subunit a, MT-ATP8/subunit 8, ATP5ME/subunit e, ATP5MF/subunit f, ATP5MG/subunit g, ATP5MK/subunit k, ATP5MJ/subunit j, ATP5F1C/subunit gamma, ATP5F1D/subunit delta, ATP5F1E/subunit epsilon, ATP5PF/subunit F6, ATP5PB/subunit b, ATP5PD/subunit d, ATP5PO/subunit OSCP. ATP synthase complex consists of a soluble F(1) head domain (subunits alpha(3) and beta(3)) - the catalytic core - and a membrane F(0) domain - the membrane proton channel (subunits c, a, 8, e, f, g, k and j). These two domains are linked by a central stalk (subunits gamma, delta, and epsilon) rotating inside the F1 region and a stationary peripheral stalk (subunits F6, b, d, and OSCP).

It is found in the mitochondrion inner membrane. In terms of biological role, subunit alpha, of the mitochondrial membrane ATP synthase complex (F(1)F(0) ATP synthase or Complex V) that produces ATP from ADP in the presence of a proton gradient across the membrane which is generated by electron transport complexes of the respiratory chain. ATP synthase complex consist of a soluble F(1) head domain - the catalytic core - and a membrane F(1) domain - the membrane proton channel. These two domains are linked by a central stalk rotating inside the F(1) region and a stationary peripheral stalk. During catalysis, ATP synthesis in the catalytic domain of F(1) is coupled via a rotary mechanism of the central stalk subunits to proton translocation. In vivo, can only synthesize ATP although its ATP hydrolase activity can be activated artificially in vitro. With the catalytic subunit beta (ATP5F1B), forms the catalytic core in the F(1) domain. Subunit alpha does not bear the catalytic high-affinity ATP-binding sites. In Xenopus laevis (African clawed frog), this protein is ATP synthase F(1) complex subunit alpha, mitochondrial.